Reading from the N-terminus, the 351-residue chain is S-adenosylmethionine:tRNA ribosyltransferase-isomerase (351 aa).

The protein belongs to the QueA family. As to quaternary structure, monomer.

Its subcellular location is the cytoplasm. It carries out the reaction 7-aminomethyl-7-carbaguanosine(34) in tRNA + S-adenosyl-L-methionine = epoxyqueuosine(34) in tRNA + adenine + L-methionine + 2 H(+). It participates in tRNA modification; tRNA-queuosine biosynthesis. In terms of biological role, transfers and isomerizes the ribose moiety from AdoMet to the 7-aminomethyl group of 7-deazaguanine (preQ1-tRNA) to give epoxyqueuosine (oQ-tRNA). The protein is S-adenosylmethionine:tRNA ribosyltransferase-isomerase of Idiomarina loihiensis (strain ATCC BAA-735 / DSM 15497 / L2-TR).